The following is a 393-amino-acid chain: NAD(P)H-quinone oxidoreductase subunit H, chloroplastic (393 aa).

Belongs to the complex I 49 kDa subunit family. NDH is composed of at least 16 different subunits, 5 of which are encoded in the nucleus.

The protein resides in the plastid. It is found in the chloroplast thylakoid membrane. The enzyme catalyses a plastoquinone + NADH + (n+1) H(+)(in) = a plastoquinol + NAD(+) + n H(+)(out). The catalysed reaction is a plastoquinone + NADPH + (n+1) H(+)(in) = a plastoquinol + NADP(+) + n H(+)(out). Its function is as follows. NDH shuttles electrons from NAD(P)H:plastoquinone, via FMN and iron-sulfur (Fe-S) centers, to quinones in the photosynthetic chain and possibly in a chloroplast respiratory chain. The immediate electron acceptor for the enzyme in this species is believed to be plastoquinone. Couples the redox reaction to proton translocation, and thus conserves the redox energy in a proton gradient. The sequence is that of NAD(P)H-quinone oxidoreductase subunit H, chloroplastic from Saccharum hybrid (Sugarcane).